We begin with the raw amino-acid sequence, 662 residues long: UPF0313 protein CPE1196 (662 aa).

Residues 296 to 567 (AIEEVKFSLV…AMQRALLQFK (272 aa)) enclose the Radical SAM core domain. Cysteine 310, cysteine 314, and cysteine 317 together coordinate [4Fe-4S] cluster. The interval 597–662 (RDKNSFGKGN…QRGSKGKKRR (66 aa)) is disordered. Residues 618 to 632 (NRNENSGRRESEDKK) are compositionally biased toward basic and acidic residues. Residues 633–644 (RSSHSKKQRGNK) show a composition bias toward basic residues.

Belongs to the UPF0313 family. The cofactor is [4Fe-4S] cluster.

The protein is UPF0313 protein CPE1196 of Clostridium perfringens (strain 13 / Type A).